Here is a 133-residue protein sequence, read N- to C-terminus: Covalently-linked cell wall protein 12 (133 aa).

A signal peptide spans 1 to 18 (MQFSTVASIAAVAAVASA). Asn21 carries an N-linked (GlcNAc...) asparagine glycan. Residues Thr23, Thr24, and Thr26 are each glycosylated (O-linked (Man) threonine). O-linked (Man) serine glycosylation is found at Ser28 and Ser31. O-linked (Man) threonine glycosylation is found at Thr32, Thr33, Thr36, and Thr38. Ser39 and Ser46 each carry an O-linked (Man) serine glycan. A glycan (O-linked (Man) threonine) is linked at Thr48. Repeat copies occupy residues 75–88 (TTEA…TAAP) and 91–103 (STEA…SAAP). Residues 79–104 (PKNGTSTAAPVTSTEAPKNTTSAAPT) form a disordered region. Lys80 is covalently cross-linked (Glycyl lysine isopeptide (Lys-Gly) (interchain with G-Cter in ubiquitin)). N-linked (GlcNAc...) asparagine glycosylation is found at Asn81 and Asn97. Polar residues predominate over residues 81-104 (NGTSTAAPVTSTEAPKNTTSAAPT). Gly112 carries the GPI-anchor amidated glycine lipid modification. Positions 113–133 (AAAKALPAAGALLAGAAALLL) are cleaved as a propeptide — removed in mature form.

The protein to yeast protein YDR134C. In terms of processing, extensively O-glycosylated; glycans consist probably of single mannose residues. N-glycosylated. Post-translationally, the GPI-anchor is attached to the protein in the endoplasmic reticulum and serves to target the protein to the cell surface. There, the glucosamine-inositol phospholipid moiety is cleaved off and the GPI-modified mannoprotein is covalently attached via its lipidless GPI glycan remnant to the 1,6-beta-glucan of the outer cell wall layer.

Its subcellular location is the secreted. It is found in the cell wall. The protein resides in the membrane. Component of the cell wall. May play a role in the formation of a tightly packed outer mannan layer, which protects the inner glucan. In Saccharomyces cerevisiae (strain ATCC 204508 / S288c) (Baker's yeast), this protein is Covalently-linked cell wall protein 12 (CCW12).